The chain runs to 370 residues: Peptide chain release factor 1 (370 aa).

An N5-methylglutamine modification is found at Gln239.

This sequence belongs to the prokaryotic/mitochondrial release factor family. In terms of processing, methylated by PrmC. Methylation increases the termination efficiency of RF1.

The protein localises to the cytoplasm. Its function is as follows. Peptide chain release factor 1 directs the termination of translation in response to the peptide chain termination codons UAG and UAA. The polypeptide is Peptide chain release factor 1 (Bacteroides fragilis (strain ATCC 25285 / DSM 2151 / CCUG 4856 / JCM 11019 / LMG 10263 / NCTC 9343 / Onslow / VPI 2553 / EN-2)).